Reading from the N-terminus, the 435-residue chain is Cytochrome c biogenesis protein Ccs1 (435 aa).

3 helical membrane-spanning segments follow: residues 17–37 (LSLS…GTII), 77–97 (NPCF…CTFS), and 163–183 (IAPI…LISL).

Belongs to the Ccs1/CcsB family. In terms of assembly, may interact with CcsA.

The protein localises to the plastid. It localises to the chloroplast thylakoid membrane. Its function is as follows. Required during biogenesis of c-type cytochromes (cytochrome c6 and cytochrome f) at the step of heme attachment. This Gracilaria tenuistipitata var. liui (Red alga) protein is Cytochrome c biogenesis protein Ccs1.